Reading from the N-terminus, the 367-residue chain is UDP-N-acetylglucosamine--N-acetylmuramyl-(pentapeptide) pyrophosphoryl-undecaprenol N-acetylglucosamine transferase (367 aa).

UDP-N-acetyl-alpha-D-glucosamine is bound by residues 15–17 (TGG), asparagine 127, arginine 163, serine 191, isoleucine 249, and glutamine 294.

It belongs to the glycosyltransferase 28 family. MurG subfamily.

The protein localises to the cell inner membrane. The enzyme catalyses di-trans,octa-cis-undecaprenyl diphospho-N-acetyl-alpha-D-muramoyl-L-alanyl-D-glutamyl-meso-2,6-diaminopimeloyl-D-alanyl-D-alanine + UDP-N-acetyl-alpha-D-glucosamine = di-trans,octa-cis-undecaprenyl diphospho-[N-acetyl-alpha-D-glucosaminyl-(1-&gt;4)]-N-acetyl-alpha-D-muramoyl-L-alanyl-D-glutamyl-meso-2,6-diaminopimeloyl-D-alanyl-D-alanine + UDP + H(+). It participates in cell wall biogenesis; peptidoglycan biosynthesis. Its function is as follows. Cell wall formation. Catalyzes the transfer of a GlcNAc subunit on undecaprenyl-pyrophosphoryl-MurNAc-pentapeptide (lipid intermediate I) to form undecaprenyl-pyrophosphoryl-MurNAc-(pentapeptide)GlcNAc (lipid intermediate II). The polypeptide is UDP-N-acetylglucosamine--N-acetylmuramyl-(pentapeptide) pyrophosphoryl-undecaprenol N-acetylglucosamine transferase (Burkholderia multivorans (strain ATCC 17616 / 249)).